Consider the following 123-residue polypeptide: Amoebiasin-2 (123 aa).

The signal sequence occupies residues 1–16 (MKQFIFFALLCTSTYA). A BC loop motif is present at residues 45–50 (NPSTGY). The short motif at 71–81 (EPHPSGMVGFP) is the DE loop element. Positions 105–114 (PWEKGKEPLR) match the FG loop motif.

The protein belongs to the protease inhibitor I42 family. Monomer. May form homodimer. Interacts with cysteine protease CP2. Interacts with cysteine protease CP5.

The protein resides in the cytoplasmic vesicle. Its subcellular location is the lysosome. It is found in the phagosome. Its function is as follows. Cysteine protease inhibitor. Inhibits cysteine proteases CP1, CP2 and to a lesser extent CP5. This Entamoeba histolytica (strain ATCC 30459 / HM-1:IMSS / ABRM) protein is Amoebiasin-2.